Consider the following 224-residue polypeptide: Cytidylate kinase (224 aa).

Position 11 to 19 (11 to 19 (GPASAGKST)) interacts with ATP.

This sequence belongs to the cytidylate kinase family. Type 1 subfamily.

It localises to the cytoplasm. The enzyme catalyses CMP + ATP = CDP + ADP. It carries out the reaction dCMP + ATP = dCDP + ADP. The polypeptide is Cytidylate kinase (Ligilactobacillus salivarius (strain UCC118) (Lactobacillus salivarius)).